Consider the following 245-residue polypeptide: tRNA (guanine-N(1)-)-methyltransferase (245 aa).

S-adenosyl-L-methionine is bound by residues Gly-112 and 132 to 137 (IGDFVL).

This sequence belongs to the RNA methyltransferase TrmD family. In terms of assembly, homodimer.

It is found in the cytoplasm. The enzyme catalyses guanosine(37) in tRNA + S-adenosyl-L-methionine = N(1)-methylguanosine(37) in tRNA + S-adenosyl-L-homocysteine + H(+). Its function is as follows. Specifically methylates guanosine-37 in various tRNAs. In Geobacter metallireducens (strain ATCC 53774 / DSM 7210 / GS-15), this protein is tRNA (guanine-N(1)-)-methyltransferase.